We begin with the raw amino-acid sequence, 519 residues long: Sodium-dependent dicarboxylate transporter SdcS (519 aa).

The next 14 membrane-spanning stretches (helical) occupy residues 29 to 49, 59 to 79, 103 to 123, 136 to 156, 159 to 179, 201 to 221, 241 to 261, 297 to 317, 322 to 342, 362 to 382, 395 to 415, 428 to 448, 451 to 471, and 490 to 510; these read VGQL…LLLF, VFVL…AIPI, AQYG…AIAM, IINT…IATG, SMFV…LAII, ALVL…LIGT, FAKW…LVWI, KVVL…EFLL, FTSE…LFLI, LPWG…GISE, LIEG…VLFL, ILPI…LLMV, AMAA…AIVF, and LLSI…VLGI.

Belongs to the SLC13A/DASS transporter (TC 2.A.47) family. NADC subfamily.

Its subcellular location is the cell membrane. Mediates the transport of dicarboxylates across the cytoplasmic membrane via a Na(+)-electrochemical gradient. The protein is Sodium-dependent dicarboxylate transporter SdcS (sdcS) of Staphylococcus saprophyticus subsp. saprophyticus (strain ATCC 15305 / DSM 20229 / NCIMB 8711 / NCTC 7292 / S-41).